Reading from the N-terminus, the 354-residue chain is CX3C chemokine receptor 1 (354 aa).

The Extracellular segment spans residues 1 to 32; that stretch reads MPTSFPELDLENFEYDDSAEACYLGDIVAFGT. The helical transmembrane segment at 33–60 threads the bilayer; sequence IFLSIFYSLVFTFGLVGNLLVVLALTNS. Residues 61-70 lie on the Cytoplasmic side of the membrane; the sequence is RKSKSITDIY. A helical membrane pass occupies residues 71–91; that stretch reads LLNLALSDLLFVATLPFWTHY. The Extracellular segment spans residues 92–104; sequence LISHEGLHNAMCK. Residues cysteine 103 and cysteine 176 are joined by a disulfide bond. The chain crosses the membrane as a helical span at residues 105–126; it reads LTTAFFFIGFFGGIFFITVISI. Residues 127-143 are Cytoplasmic-facing; the sequence is DRYLAIVLAANSMNNRT. A helical membrane pass occupies residues 144–168; that stretch reads VQHGVTISLGVWAAAILVASPQFMF. Over 169-196 the chain is Extracellular; it reads TKRKDNECLGDYPEVLQEIWPVLRNSEV. A helical membrane pass occupies residues 197–216; it reads NILGFVLPLLIMSFCYFRIV. The Cytoplasmic portion of the chain corresponds to 217-232; the sequence is RTLFSCKNRKKARAIR. Residues 233–257 form a helical membrane-spanning segment; that stretch reads LILLVVVVFFLFWTPYNIVIFLETL. Topologically, residues 258-274 are extracellular; the sequence is KFYNFFPSCGMKRDLRW. Residues 275 to 298 traverse the membrane as a helical segment; that stretch reads ALSVTETVAFSHCCLNPFIYAFAG. The Cytoplasmic segment spans residues 299 to 354; the sequence is EKFRRYLRHLYNKCLAVLCGRPVHAGFSTESQRSRQDSILSSLTHYTSEGEGSLLL. Position 345 is a phosphothreonine (threonine 345).

The protein belongs to the G-protein coupled receptor 1 family. Found in a ternary complex with CX3CL1 and ITGAV:ITGB3 or ITGA4:ITGB1. Post-translationally, this protein is not N-glycosylated which is unusual for G-protein-coupled receptors. Most abundant in adult spinal cord, brain, kidney, gut, uterus and testes.

Its subcellular location is the cell membrane. Its function is as follows. Receptor for the C-X3-C chemokine fractalkine (CX3CL1) present on many early leukocyte cells; CX3CR1-CX3CL1 signaling exerts distinct functions in different tissue compartments, such as immune response, inflammation, cell adhesion and chemotaxis. CX3CR1-CX3CL1 signaling mediates cell migratory functions. Responsible for the recruitment of natural killer (NK) cells to inflamed tissues. Acts as a regulator of inflammation process leading to atherogenesis by mediating macrophage and monocyte recruitment to inflamed atherosclerotic plaques, promoting cell survival. Involved in airway inflammation by promoting interleukin 2-producing T helper (Th2) cell survival in inflamed lung. Involved in the migration of circulating monocytes to non-inflamed tissues, where they differentiate into macrophages and dendritic cells. Acts as a negative regulator of angiogenesis, probably by promoting macrophage chemotaxis. Plays a key role in brain microglia by regulating inflammatory response in the central nervous system (CNS) and regulating synapse maturation. Required to restrain the microglial inflammatory response in the CNS and the resulting parenchymal damage in response to pathological stimuli. Involved in brain development by participating in synaptic pruning, a natural process during which brain microglia eliminates extra synapses during postnatal development. Synaptic pruning by microglia is required to promote the maturation of circuit connectivity during brain development. Acts as an important regulator of the gut microbiota by controlling immunity to intestinal bacteria and fungi. Expressed in lamina propria dendritic cells in the small intestine, which form transepithelial dendrites capable of taking up bacteria in order to provide defense against pathogenic bacteria. Required to initiate innate and adaptive immune responses against dissemination of commensal fungi (mycobiota) component of the gut: expressed in mononuclear phagocytes (MNPs) and acts by promoting induction of antifungal IgG antibodies response to confer protection against disseminated C.albicans or C.auris infection. Also acts as a receptor for C-C motif chemokine CCL26, inducing cell chemotaxis. The chain is CX3C chemokine receptor 1 from Rattus norvegicus (Rat).